Here is a 148-residue protein sequence, read N- to C-terminus: MLNYFVYPYGIENDIGIKFYMILVPIISIVLIIINYIITNKSDNNINKTGPYECGFDSFRQSRTTYSIKFILIAILFLPFDLELTSILPYTLSIYNLNIYGLFILLYFLLPLIIGFIIEINLKAIYITKIFNRNVKSITSYVKYNNKI.

The next 3 membrane-spanning stretches (helical) occupy residues 19-39 (FYMILVPIISIVLIIINYIIT), 70-90 (FILIAILFLPFDLELTSILPY), and 99-119 (IYGLFILLYFLLPLIIGFIIE).

Belongs to the complex I subunit 3 family.

It localises to the mitochondrion membrane. It carries out the reaction a ubiquinone + NADH + 5 H(+)(in) = a ubiquinol + NAD(+) + 4 H(+)(out). In terms of biological role, core subunit of the mitochondrial membrane respiratory chain NADH dehydrogenase (Complex I) that is believed to belong to the minimal assembly required for catalysis. Complex I functions in the transfer of electrons from NADH to the respiratory chain. The immediate electron acceptor for the enzyme is believed to be ubiquinone. The protein is NADH-ubiquinone oxidoreductase chain 3 (ND3) of Wickerhamomyces canadensis (Yeast).